The following is a 450-amino-acid chain: Protein tweety homolog 1 (450 aa).

The Extracellular portion of the chain corresponds to 1-43 (MGAPPGYRPSAWVHLLHQLPRADFQLRPVPSVFAPQEQEYQQA). The helical transmembrane segment at 44-64 (LLLVAALAGLGLGLSLIFIAV) threads the bilayer. Over 65–88 (YLIRFCCCRPPEPPGSKIPSPGGG) the chain is Cytoplasmic. Residues 89–109 (CVTWSCIVALLAGCTGIGIGF) traverse the membrane as a helical segment. Topologically, residues 110 to 214 (YGNSETSDGV…NVSFVEEYRW (105 aa)) are extracellular. N-linked (GlcNAc...) asparagine glycosylation is found at Asn-130 and Asn-205. The chain crosses the membrane as a helical span at residues 215–235 (LAYVLLLLLELLVCLFTLLGL). Over 236–240 (AKQSK) the chain is Cytoplasmic. A helical membrane pass occupies residues 241 to 261 (WLVIVMTVMSLLVLVLSWGSM). Residues 262-390 (GLEAATAVGL…LRGLCEDALE (129 aa)) lie on the Extracellular side of the membrane. Cystine bridges form between Cys-275/Cys-385 and Cys-303/Cys-370. N-linked (GlcNAc...) asparagine glycans are attached at residues Asn-284 and Asn-355. A helical membrane pass occupies residues 391–411 (GLLFLLLFSLLSAGALATALC). Over 412–450 (SLPRAWALFPPSDDYDDTDDDDPFNPQESKRFVQWQSSI) the chain is Cytoplasmic. The interval 428-450 (DTDDDDPFNPQESKRFVQWQSSI) is disordered. Ser-440 is modified (phosphoserine).

Belongs to the tweety family. In terms of assembly, homotetramer; disulfide-linked. Homodimer. Post-translationally, N-glycosylated. Contains high-mannose, hybrid and complex oligosaccharides. Expressed in brain, eye, ovary and testis, and at lower levels in muscle, placenta, liver and lung.

The protein localises to the cell membrane. It carries out the reaction chloride(in) = chloride(out). The enzyme catalyses L-glutamate(out) = L-glutamate(in). Its function is as follows. Calcium-independent, swelling-dependent volume-regulated anion channel (VRAC-swell) which plays a pivotal role in the process of regulatory volume decrease (RVD) in the brain through the efflux of anions like chloride and organic osmolytes like glutamate. In terms of biological role, ca(2+)-independent, swelling-activated chloride channel, possibly involved in regulation of cell volume. In Homo sapiens (Human), this protein is Protein tweety homolog 1 (TTYH1).